We begin with the raw amino-acid sequence, 429 residues long: Glutamate-1-semialdehyde 2,1-aminomutase 2 (429 aa).

Lysine 268 carries the post-translational modification N6-(pyridoxal phosphate)lysine.

This sequence belongs to the class-III pyridoxal-phosphate-dependent aminotransferase family. HemL subfamily. Homodimer. The cofactor is pyridoxal 5'-phosphate.

The protein resides in the cytoplasm. The enzyme catalyses (S)-4-amino-5-oxopentanoate = 5-aminolevulinate. The protein operates within porphyrin-containing compound metabolism; protoporphyrin-IX biosynthesis; 5-aminolevulinate from L-glutamyl-tRNA(Glu): step 2/2. The protein is Glutamate-1-semialdehyde 2,1-aminomutase 2 of Bacillus anthracis (strain A0248).